The following is a 734-amino-acid chain: Photosystem I P700 chlorophyll a apoprotein A2 (734 aa).

8 helical membrane passes run 46 to 69 (IFAS…FHVA), 135 to 158 (LYTG…LHLQ), 175 to 199 (LNHH…HVAI), 273 to 291 (MAHH…GHMY), 330 to 353 (LHFQ…QHMY), 369 to 395 (SALY…IFFI), 417 to 439 (ALIS…LYVH), and 517 to 535 (FLVH…LILV). [4Fe-4S] cluster contacts are provided by cysteine 559 and cysteine 568. 2 consecutive transmembrane segments (helical) span residues 575–596 (AFYL…YWHW) and 643–665 (LSVW…MFLI). Positions 654, 662, and 670 each coordinate chlorophyll a. Phylloquinone is bound at residue tryptophan 671. Residues 707 to 727 (LVGLAHFSVGYVFTYAAFVIA) form a helical membrane-spanning segment.

Belongs to the PsaA/PsaB family. In terms of assembly, the PsaA/B heterodimer binds the P700 chlorophyll special pair and subsequent electron acceptors. PSI consists of a core antenna complex that captures photons, and an electron transfer chain that converts photonic excitation into a charge separation. The eukaryotic PSI reaction center is composed of at least 11 subunits. P700 is a chlorophyll a/chlorophyll a' dimer, A0 is one or more chlorophyll a, A1 is one or both phylloquinones and FX is a shared 4Fe-4S iron-sulfur center. serves as cofactor.

The protein localises to the plastid. It is found in the chloroplast thylakoid membrane. It catalyses the reaction reduced [plastocyanin] + hnu + oxidized [2Fe-2S]-[ferredoxin] = oxidized [plastocyanin] + reduced [2Fe-2S]-[ferredoxin]. Its function is as follows. PsaA and PsaB bind P700, the primary electron donor of photosystem I (PSI), as well as the electron acceptors A0, A1 and FX. PSI is a plastocyanin/cytochrome c6-ferredoxin oxidoreductase, converting photonic excitation into a charge separation, which transfers an electron from the donor P700 chlorophyll pair to the spectroscopically characterized acceptors A0, A1, FX, FA and FB in turn. Oxidized P700 is reduced on the lumenal side of the thylakoid membrane by plastocyanin or cytochrome c6. This Nephroselmis olivacea (Green alga) protein is Photosystem I P700 chlorophyll a apoprotein A2.